A 186-amino-acid chain; its full sequence is Imidazoleglycerol-phosphate dehydratase (186 aa).

This sequence belongs to the imidazoleglycerol-phosphate dehydratase family.

The protein resides in the cytoplasm. The catalysed reaction is D-erythro-1-(imidazol-4-yl)glycerol 3-phosphate = 3-(imidazol-4-yl)-2-oxopropyl phosphate + H2O. It functions in the pathway amino-acid biosynthesis; L-histidine biosynthesis; L-histidine from 5-phospho-alpha-D-ribose 1-diphosphate: step 6/9. The protein is Imidazoleglycerol-phosphate dehydratase of Dictyoglomus thermophilum (strain ATCC 35947 / DSM 3960 / H-6-12).